We begin with the raw amino-acid sequence, 364 residues long: Nucleoside ABC transporter permease protein NupB (364 aa).

A run of 8 helical transmembrane segments spans residues 9-29 (LVPLIAIVFGFLLGAIIMLAF), 77-99 (FNIGMSGQALAGWISSMWFALSF), 105-125 (LLMIPLVVIIGMVFGAFMGFI), 138-158 (VITTIMLNYIMLFFSTFMIHS), 195-215 (TLNIGLIIAIIALVIMAIIFT), 244-264 (LILSMVVAGALAGLGGVVYGF), 284-304 (MAVALLGGNSPIGILFAALLF), and 326-346 (VVTAAIIFFIAVKFIIEVMLP).

It belongs to the binding-protein-dependent transport system permease family. In terms of assembly, the complex is composed of two ATP-binding proteins (NupA), two transmembrane proteins (NupB and NupC) and a solute-binding protein (BmpA).

It is found in the cell membrane. Its function is as follows. Part of an ABC transporter complex involved in the uptake of all common nucleosides. Responsible for the translocation of the substrate across the membrane. This chain is Nucleoside ABC transporter permease protein NupB, found in Lactococcus lactis subsp. cremoris (strain MG1363).